Consider the following 689-residue polypeptide: Glycine--tRNA ligase beta subunit (689 aa).

It belongs to the class-II aminoacyl-tRNA synthetase family. In terms of assembly, tetramer of two alpha and two beta subunits.

It is found in the cytoplasm. It carries out the reaction tRNA(Gly) + glycine + ATP = glycyl-tRNA(Gly) + AMP + diphosphate. The chain is Glycine--tRNA ligase beta subunit from Acinetobacter baumannii (strain AB307-0294).